The primary structure comprises 633 residues: DNA mismatch repair protein MutL (633 aa).

Belongs to the DNA mismatch repair MutL/HexB family.

Its function is as follows. This protein is involved in the repair of mismatches in DNA. It is required for dam-dependent methyl-directed DNA mismatch repair. May act as a 'molecular matchmaker', a protein that promotes the formation of a stable complex between two or more DNA-binding proteins in an ATP-dependent manner without itself being part of a final effector complex. This is DNA mismatch repair protein MutL from Macrococcus caseolyticus (strain JCSC5402) (Macrococcoides caseolyticum).